A 227-amino-acid chain; its full sequence is Orotidine 5'-phosphate decarboxylase (227 aa).

Substrate contacts are provided by residues Asp8, Lys30, 59 to 68 (DLKLYDIPNT), Thr118, Arg178, Gln187, Gly207, and Arg208. Lys61 acts as the Proton donor in catalysis.

Belongs to the OMP decarboxylase family. Type 1 subfamily. As to quaternary structure, homodimer.

It carries out the reaction orotidine 5'-phosphate + H(+) = UMP + CO2. It participates in pyrimidine metabolism; UMP biosynthesis via de novo pathway; UMP from orotate: step 2/2. In terms of biological role, catalyzes the decarboxylation of orotidine 5'-monophosphate (OMP) to uridine 5'-monophosphate (UMP). This chain is Orotidine 5'-phosphate decarboxylase, found in Sulfurimonas denitrificans (strain ATCC 33889 / DSM 1251) (Thiomicrospira denitrificans (strain ATCC 33889 / DSM 1251)).